The primary structure comprises 148 residues: SPbeta prophage-derived uncharacterized protein YomK (148 aa).

The next 2 helical transmembrane spans lie at Trp72 to Val92 and Asn104 to Ile124.

It is found in the cell membrane. This Bacillus subtilis (strain 168) protein is SPbeta prophage-derived uncharacterized protein YomK (yomK).